The primary structure comprises 365 residues: tRNA N6-adenosine threonylcarbamoyltransferase (365 aa).

Residues His-119 and His-123 each contribute to the Fe cation site. Residues 141 to 145 (LVSGG), Asp-174, Gly-187, and Asn-288 each bind substrate. Residue Asp-316 participates in Fe cation binding.

This sequence belongs to the KAE1 / TsaD family. The cofactor is Fe(2+).

The protein resides in the cytoplasm. It catalyses the reaction L-threonylcarbamoyladenylate + adenosine(37) in tRNA = N(6)-L-threonylcarbamoyladenosine(37) in tRNA + AMP + H(+). In terms of biological role, required for the formation of a threonylcarbamoyl group on adenosine at position 37 (t(6)A37) in tRNAs that read codons beginning with adenine. Is involved in the transfer of the threonylcarbamoyl moiety of threonylcarbamoyl-AMP (TC-AMP) to the N6 group of A37, together with TsaE and TsaB. TsaD likely plays a direct catalytic role in this reaction. The sequence is that of tRNA N6-adenosine threonylcarbamoyltransferase from Agrobacterium fabrum (strain C58 / ATCC 33970) (Agrobacterium tumefaciens (strain C58)).